The primary structure comprises 934 residues: Phosphoenolpyruvate carboxylase (934 aa).

Active-site residues include histidine 161 and lysine 593.

The protein belongs to the PEPCase type 1 family. Mg(2+) serves as cofactor.

The catalysed reaction is oxaloacetate + phosphate = phosphoenolpyruvate + hydrogencarbonate. Its function is as follows. Forms oxaloacetate, a four-carbon dicarboxylic acid source for the tricarboxylic acid cycle. The sequence is that of Phosphoenolpyruvate carboxylase (ppc) from Mycobacterium leprae (strain TN).